The chain runs to 290 residues: Probable protein phosphatase 2C 62 (290 aa).

The 251-residue stretch at 38–288 (KHGYHLVKGK…DDISCIVVKF (251 aa)) folds into the PPM-type phosphatase domain. Residues D75, G76, D240, and D279 each contribute to the Mn(2+) site.

It belongs to the PP2C family. Mg(2+) serves as cofactor. The cofactor is Mn(2+).

It catalyses the reaction O-phospho-L-seryl-[protein] + H2O = L-seryl-[protein] + phosphate. The catalysed reaction is O-phospho-L-threonyl-[protein] + H2O = L-threonyl-[protein] + phosphate. This Oryza sativa subsp. japonica (Rice) protein is Probable protein phosphatase 2C 62.